We begin with the raw amino-acid sequence, 182 residues long: Ribosome-recycling factor (182 aa).

It belongs to the RRF family.

It localises to the cytoplasm. Functionally, responsible for the release of ribosomes from messenger RNA at the termination of protein biosynthesis. May increase the efficiency of translation by recycling ribosomes from one round of translation to another. This is Ribosome-recycling factor from Prochlorococcus marinus (strain SARG / CCMP1375 / SS120).